Reading from the N-terminus, the 557-residue chain is Formate--tetrahydrofolate ligase 2 (557 aa).

66–73 (TPAGEGKT) contacts ATP.

Belongs to the formate--tetrahydrofolate ligase family.

The catalysed reaction is (6S)-5,6,7,8-tetrahydrofolate + formate + ATP = (6R)-10-formyltetrahydrofolate + ADP + phosphate. It participates in one-carbon metabolism; tetrahydrofolate interconversion. This is Formate--tetrahydrofolate ligase 2 from Streptococcus pyogenes serotype M4 (strain MGAS10750).